Here is a 435-residue protein sequence, read N- to C-terminus: MIIGKKPCSVCGEAGDGAHFGAEACRACAAFFRRSVALNKAYVCRAMGACIIQKNVRCMCRACRFSKCMSVGMRKSAVQRHRELFGRQDSSDGSNPRVSPSTSWPMDVSPVNIEEPGMATLNCLNENYTHMSNVRRVIHNTGSGNIFNPREPKAVAYTDAHSVHLKEIGLVADWIIKSYPDFQKVHQEQKKLLYRNFFLPFMILECGYHCCLNDRTDILFLPSGDFIDCSRPETFYGSHINSHLMSPEEAIRMFVPSFEIYRRNVLDPMRREKVDNYEFFTLCSLVLWDHGLEGQIDECVNMARHNRERILREILYYYRRVKQIPDPSMRLANLLVLLPALQRSVRRFQEDVEITHVFNVYSVEETFYELVSGRLSDGFFQKATQLDATPEEMKEIKKEVECVWDLNTSQVVDLYDLPPTSFLTPTSSTPSSTEM.

The segment at residues 5 to 80 (KKPCSVCGEA…VGMRKSAVQR (76 aa)) is a DNA-binding region (nuclear receptor). 2 NR C4-type zinc fingers span residues 8–28 (CSVC…CRAC) and 44–63 (CRAM…CRAC). The disordered stretch occupies residues 84 to 106 (LFGRQDSSDGSNPRVSPSTSWPM). The segment covering 91 to 104 (SDGSNPRVSPSTSW) has biased composition (polar residues). The 262-residue stretch at 113-374 (IEEPGMATLN…ETFYELVSGR (262 aa)) folds into the NR LBD domain.

The protein belongs to the nuclear hormone receptor family.

Its subcellular location is the nucleus. Its function is as follows. Orphan nuclear receptor. The sequence is that of Nuclear hormone receptor family member nhr-28 from Caenorhabditis briggsae.